Consider the following 129-residue polypeptide: MFILGSVGCVEADEASPLYCLSAALIRLSNDEMGGNVMWFIALLFALLIARCTCHTKNTHPDFSKPTFCHQHAALTNSLSSLYRCFVPDGTAMLPTATKKTPQRRKNGAIIHRVVIYHGRESANGISKQ.

A helical transmembrane segment spans residues 33-50; sequence MGGNVMWFIALLFALLIA.

It is found in the membrane. This is an uncharacterized protein from Saccharomyces cerevisiae (strain ATCC 204508 / S288c) (Baker's yeast).